Reading from the N-terminus, the 383-residue chain is tRNA(Met) cytidine acetate ligase (383 aa).

ATP contacts are provided by residues 7 to 20 (ITEYNPLHNGHRYH), glycine 101, asparagine 150, and arginine 175.

This sequence belongs to the TmcAL family.

It localises to the cytoplasm. The catalysed reaction is cytidine(34) in elongator tRNA(Met) + acetate + ATP = N(4)-acetylcytidine(34) in elongator tRNA(Met) + AMP + diphosphate. Functionally, catalyzes the formation of N(4)-acetylcytidine (ac(4)C) at the wobble position of elongator tRNA(Met), using acetate and ATP as substrates. First activates an acetate ion to form acetyladenylate (Ac-AMP) and then transfers the acetyl group to tRNA to form ac(4)C34. The polypeptide is tRNA(Met) cytidine acetate ligase (Lactiplantibacillus plantarum (strain ATCC BAA-793 / NCIMB 8826 / WCFS1) (Lactobacillus plantarum)).